The sequence spans 135 residues: MQPSSPSTSHCSQVSIKVQHKIAKKKPIRRKRVDLDCGCSYYLHLNCNNHGFTHRGTHHCSSGREWRFYLGDKQSPLFQDNRTQPEAISNEPRHHFHSDKIQPQHQEGNGDSQMFSRLPNLDDITASDWSFLKSI.

The short motif at 17 to 32 (KVQHKIAKKKPIRRKR) is the Nuclear localization signal element. The segment at 37 to 54 (CGCSYYLHLNCNNHGFTH) is a zinc-finger region. 2 stretches are compositionally biased toward polar residues: residues 77–87 (LFQDNRTQPEA) and 101–115 (IQPQHQEGNGDSQMF). Residues 77–117 (LFQDNRTQPEAISNEPRHHFHSDKIQPQHQEGNGDSQMFSR) form a disordered region. The tract at residues 120-135 (NLDDITASDWSFLKSI) is transactivation.

Belongs to the geminiviridae transcriptional activator protein family. In terms of assembly, monomer. Homodimer. Homooligomer. Self-interaction correlates with nuclear localization and efficient activation of transcription. Monomers suppress local silencing by interacting with and inactivating host adenosine kinase 2 (ADK2) in the cytoplasm. Interacts with and inhibits host SNF1 kinase. Binds to ssDNA. May interact with host RPS27A. Post-translationally, phosphorylated.

The protein resides in the host nucleus. It is found in the host cytoplasm. Multifunctional protein that modulates host antiviral defenses and promotes host attractiveness to insect vectors. Acts as a suppressor of RNA-mediated gene silencing, also known as post-transcriptional gene silencing (PTGS), a mechanism of plant viral defense that limits the accumulation of viral RNAs. TrAP suppresses the host RNA silencing by inhibiting adenosine kinase 2 (ADK2), a kinase involved in a general methylation pathway. Also suppresses the host basal defense by interacting with and inhibiting SNF1 kinase, a key regulator of cell metabolism implicated in innate antiviral defense. In terms of biological role, inhibits signal transduction by the phytohormone jasmonate, making the infected plant more attractive to aphids, which are the second host to play a role as a dissemination vector. Acts by binding to ubiquitin precursor RPS27A, thereby preventing ubiquitin degradation of JAZ. The chain is Transcriptional activator protein from Tomato yellow leaf curl virus (strain Israel) (TYLCV).